We begin with the raw amino-acid sequence, 703 residues long: Polyribonucleotide nucleotidyltransferase (703 aa).

Mg(2+)-binding residues include Asp485 and Asp491. One can recognise a KH domain in the interval 552–611; that stretch reads PRAYTINIDTDKIRTLIGTGGKTINKIIEETGVKIDIREDGTVFVLSSDADSANRALKMI. The S1 motif domain maps to 621 to 689; it reads GEVYLGKVTK…NQGRVNLSRK (69 aa).

The protein belongs to the polyribonucleotide nucleotidyltransferase family. Mg(2+) is required as a cofactor.

Its subcellular location is the cytoplasm. It carries out the reaction RNA(n+1) + phosphate = RNA(n) + a ribonucleoside 5'-diphosphate. Functionally, involved in mRNA degradation. Catalyzes the phosphorolysis of single-stranded polyribonucleotides processively in the 3'- to 5'-direction. The sequence is that of Polyribonucleotide nucleotidyltransferase from Clostridium acetobutylicum (strain ATCC 824 / DSM 792 / JCM 1419 / IAM 19013 / LMG 5710 / NBRC 13948 / NRRL B-527 / VKM B-1787 / 2291 / W).